Here is a 447-residue protein sequence, read N- to C-terminus: Phosphoglucosamine mutase (447 aa).

S104 (phosphoserine intermediate) is an active-site residue. The Mg(2+) site is built by S104, D243, D245, and D247. Phosphoserine is present on S104.

This sequence belongs to the phosphohexose mutase family. Requires Mg(2+) as cofactor. In terms of processing, activated by phosphorylation.

It catalyses the reaction alpha-D-glucosamine 1-phosphate = D-glucosamine 6-phosphate. Its function is as follows. Catalyzes the conversion of glucosamine-6-phosphate to glucosamine-1-phosphate. The polypeptide is Phosphoglucosamine mutase (Corynebacterium diphtheriae (strain ATCC 700971 / NCTC 13129 / Biotype gravis)).